We begin with the raw amino-acid sequence, 114 residues long: Neurotrophic factor BDNF precursor form (114 aa).

3 cysteine pairs are disulfide-bonded: cysteine 14-cysteine 81, cysteine 59-cysteine 110, and cysteine 69-cysteine 112.

This sequence belongs to the NGF-beta family. As to quaternary structure, monomers and homodimers. Binds to NTRK2/TRKB. Can form heterodimers with other neurotrophin family members, such as NTF3 and NTF4 (in vitro), but the physiological relevance of this is not clear. BDNF precursor form: interacts with the heterodimer formed by NGFR and SORCS2. Mature BDNF has much lower affinity for the heterodimer formed by NGFR and SORCS2. N-glycosylated and glycosulfated, contrary to mature BDNF. Post-translationally, mature BDNF is produced by proteolytic removal of the propeptide, catalyzed by a FURIN family member. In addition, the precursor form is proteolytically cleaved within the propeptide, but this is not an obligatory intermediate for the production of mature BDNF. Can be converted into mature BDNF by plasmin (PLG).

It is found in the secreted. In terms of biological role, important signaling molecule that activates signaling cascades downstream of NTRK2. During development, promotes the survival and differentiation of selected neuronal populations of the peripheral and central nervous systems. Participates in axonal growth, pathfinding and in the modulation of dendritic growth and morphology. Major regulator of synaptic transmission and plasticity at adult synapses in many regions of the CNS. The versatility of BDNF is emphasized by its contribution to a range of adaptive neuronal responses including long-term potentiation (LTP), long-term depression (LTD), certain forms of short-term synaptic plasticity, as well as homeostatic regulation of intrinsic neuronal excitability. Functionally, important signaling molecule that activates signaling cascades downstream of NTRK2. Activates signaling cascades via the heterodimeric receptor formed by NGFR and SORCS2. Signaling via NGFR and SORCS2 plays a role in synaptic plasticity and long-term depression (LTD). Binding to NGFR and SORCS2 promotes neuronal apoptosis. Promotes neuronal growth cone collapse. The protein is Neurotrophic factor BDNF precursor form (BDNF) of Macaca mulatta (Rhesus macaque).